The chain runs to 376 residues: DNA methyltransferase CcrM (376 aa).

The RAMA domain maps to 273 to 370 (KATLSVMTGK…IDELRSVIRN (98 aa)).

The protein belongs to the N(4)/N(6)-methyltransferase family.

The catalysed reaction is a 2'-deoxyadenosine in DNA + S-adenosyl-L-methionine = an N(6)-methyl-2'-deoxyadenosine in DNA + S-adenosyl-L-homocysteine + H(+). Its function is as follows. A beta subtype methylase that recognizes the double-stranded sequence 5'-GANTC-3' and methylates A-2 on both strands. Overexpression leads to many branched and bloated cells, two to three times the size of wild-type cells, and cells that have 1-3 times the normal amount of DNA. Contributes to the accurate cell-cycle control of DNA replication and cellular morphology. Can fully replace its ortholog in C.crescentus. The chain is DNA methyltransferase CcrM (smeIM) from Rhizobium meliloti (strain 1021) (Ensifer meliloti).